Consider the following 344-residue polypeptide: MSAENSRSEALLPLRNLWNSVKCSRDRVRDGESNDSSGTFSLANFWEILNEAVKAVSQEATKLSLMFSKPPLPSDEDCAKMGECVQKSVLTLCTVYFWLPKSQGVTLRRSVRDATAEVLEGLVQLLDVILSSPGQSLSQEQLTSTGSVWAACDHFDQIPKDNRSAVLAVLSSCVGLVKDALEEMQQALAESQDPFGDVLDDDDDDEGGRGNQDRYWSASDRQLIGQCEGLLKASAASLRKLSSAVRHNAQLETEQEIAQLDDLADAAAHVSPCVDDLALSLYPPVDRAAVEQNVCRLAAVLKKLLDITRSSHVCAEADVSWVEFLSGAVEHNLEKVRSLLRSDS.

The disordered stretch occupies residues Ser191–Tyr215.

Belongs to the CCNDBP1 family.

It localises to the cytoplasm. It is found in the nucleus. In terms of biological role, may negatively regulate cell cycle progression. The protein is Cyclin-D1-binding protein 1 homolog (ccndbp1) of Danio rerio (Zebrafish).